The sequence spans 481 residues: MANVTYTDTQLLIDGEWVDAASGKTIDVVNPATGKPIGRVAHAGIADLDRALAAAQSGFEAWRKVPAHERAATMRKAAALVRERADAIAQLMTQEQGKPLTEARVEVLSAADIIEWFADEGRRVYGRIVPPRNLGAQQTVVKEPVGPVAAFTPWNFPVNQVVRKLSAALATGCSFLVKAPEETPASPAALLRAFVDAGVPAGVIGLVYGDPAEISSYLIPHPVIRKVTFTGSTPVGKQLASLAGLHMKRATMELGGHAPVIVAEDADVALAVKAAGGAKFRNAGQVCISPTRFLVHNSIRDEFTRALVKHAEGLKVGNGLEEGTTLGALANPRRLTAMASVIDNARKVGASIETGGERIGSEGNFFAPTVIANVPLDADVFNNEPFGPVAAIRGFDKLEEAIAEANRLPFGLAGYAFTRSFANVHLLTQRLEVGMLWINQPATPWPEMPFGGVKDSGYGSEGGPEALEPYLVTKSVTVMAV.

NADP(+) is bound by residues 154-155, 178-181, and 231-232; these read WN, KAPE, and GS. Residue Glu253 is the Proton acceptor of the active site. Residue Leu254 participates in NADP(+) binding. Cys287 (nucleophile) is an active-site residue. Glu384 is an NADP(+) binding site.

It belongs to the aldehyde dehydrogenase family. Homotetramer.

It carries out the reaction 2,5-dioxopentanoate + NADP(+) + H2O = 2-oxoglutarate + NADPH + 2 H(+). The catalysed reaction is 2,5-dioxopentanoate + NAD(+) + H2O = 2-oxoglutarate + NADH + 2 H(+). It catalyses the reaction succinate semialdehyde + NAD(+) + H2O = succinate + NADH + 2 H(+). Its function is as follows. Catalyzes the NAD(P)(+)-dependent oxidation of alpha-ketoglutaric semialdehyde (alphaKGSA) to alpha-ketoglutarate. Is involved in a degradation pathway of L-arabinose that allows A.brasilense to grow on L-arabinose as a sole carbon source. Prefers NAD(+) to NADP(+) as a cosubstrate. Displays broad substrate specificity: exhibits the highest activity with alphaKGSA and succinic semialdehyde as substrates, but to a lesser extent, is also active with glutaraldehyde, benzaldehyde, and a number of aldehydes from C3 to C8. This chain is Alpha-ketoglutaric semialdehyde dehydrogenase 1 (araE), found in Azospirillum brasilense.